Reading from the N-terminus, the 110-residue chain is UPF0122 protein lmo1802 (110 aa).

The protein belongs to the UPF0122 family.

Its function is as follows. Might take part in the signal recognition particle (SRP) pathway. This is inferred from the conservation of its genetic proximity to ftsY/ffh. May be a regulatory protein. The sequence is that of UPF0122 protein lmo1802 from Listeria monocytogenes serovar 1/2a (strain ATCC BAA-679 / EGD-e).